A 928-amino-acid chain; its full sequence is DNA-binding protein RFX6 (928 aa).

Disordered stretches follow at residues 1–20 (MAKV…APQL) and 50–98 (EGQP…SKTK). The segment at residues 124-199 (TLQWLEENYI…YHYYGIGIKE (76 aa)) is a DNA-binding region (RFX-type winged-helix).

It belongs to the RFX family. In terms of assembly, interacts with RFX3. Expressed in pancreas. Expressed in pancreatic beta-cells (insulin-positive cells) and alpha-cells (glucagon-positive cells) (at protein level). Specifically expressed in pancreas, small intestine and colon. Expressed in endocrine cells in the islets.

It is found in the nucleus. Its function is as follows. Transcription factor required to direct islet cell differentiation during endocrine pancreas development. Specifically required for the differentiation of 4 of the 5 islet cell types and for the production of insulin. Not required for pancreatic PP (polypeptide-producing) cells differentiation. Acts downstream of NEUROG3 and regulates the transcription factors involved in beta-cell maturation and function, thereby restricting the expression of the beta-cell differentiation and specification genes, and thus the beta-cell fate choice. Activates transcription by forming a heterodimer with RFX3 and binding to the X-box in the promoter of target genes. Involved in glucose-stimulated insulin secretion by promoting insulin and L-type calcium channel gene transcription. The chain is DNA-binding protein RFX6 (RFX6) from Homo sapiens (Human).